The chain runs to 217 residues: Uracil-DNA glycosylase (217 aa).

Catalysis depends on aspartate 62, which acts as the Proton acceptor.

It belongs to the uracil-DNA glycosylase (UDG) superfamily. UNG family.

It is found in the cytoplasm. It catalyses the reaction Hydrolyzes single-stranded DNA or mismatched double-stranded DNA and polynucleotides, releasing free uracil.. In terms of biological role, excises uracil residues from the DNA which can arise as a result of misincorporation of dUMP residues by DNA polymerase or due to deamination of cytosine. The chain is Uracil-DNA glycosylase from Streptococcus thermophilus (strain ATCC BAA-491 / LMD-9).